The primary structure comprises 234 residues: Thiamine import ATP-binding protein ThiQ (234 aa).

Positions 2 to 230 constitute an ABC transporter domain; the sequence is LVLDDVQYTY…HPSKTLQAFV (229 aa). 32 to 39 contacts ATP; sequence GPSGAGKS.

This sequence belongs to the ABC transporter superfamily. Thiamine importer (TC 3.A.1.19.1) family. The complex is composed of two ATP-binding proteins (ThiQ), two transmembrane proteins (ThiP) and a solute-binding protein (ThiB).

The protein resides in the cell inner membrane. It carries out the reaction thiamine(out) + ATP + H2O = thiamine(in) + ADP + phosphate + H(+). In terms of biological role, part of the ABC transporter complex ThiBPQ involved in thiamine import. Responsible for energy coupling to the transport system. This chain is Thiamine import ATP-binding protein ThiQ, found in Vibrio parahaemolyticus serotype O3:K6 (strain RIMD 2210633).